Reading from the N-terminus, the 698-residue chain is Elongation factor G 1 (698 aa).

One can recognise a tr-type G domain in the interval 8-290; it reads ERYRNIGICA…AVIEFLPAPV (283 aa). GTP-binding positions include 17-24, 88-92, and 142-145; these read AHVDAGKT, DTPGH, and NKMD.

Belongs to the TRAFAC class translation factor GTPase superfamily. Classic translation factor GTPase family. EF-G/EF-2 subfamily.

It localises to the cytoplasm. Catalyzes the GTP-dependent ribosomal translocation step during translation elongation. During this step, the ribosome changes from the pre-translocational (PRE) to the post-translocational (POST) state as the newly formed A-site-bound peptidyl-tRNA and P-site-bound deacylated tRNA move to the P and E sites, respectively. Catalyzes the coordinated movement of the two tRNA molecules, the mRNA and conformational changes in the ribosome. The polypeptide is Elongation factor G 1 (Aliivibrio fischeri (strain ATCC 700601 / ES114) (Vibrio fischeri)).